We begin with the raw amino-acid sequence, 430 residues long: Mothers against decapentaplegic homolog 9 (430 aa).

An MH1 domain is found at 16–140 (PAVKRLLGWK…YRRVETPVLP (125 aa)). Residues C68, C113, C125, and H130 each coordinate Zn(2+). A disordered region spans residues 186 to 222 (CPAPPSSPGHVFPQSPCPTSYPHSPGSPSESDSPYQH). Polar residues predominate over residues 202-221 (CPTSYPHSPGSPSESDSPYQ). Positions 236–430 (WCSVAYYELN…SPHNPISSVS (195 aa)) constitute an MH2 domain.

This sequence belongs to the dwarfin/SMAD family. As to quaternary structure, interaction with the co-SMAD SMAD4. Interacts with PEBP2-alpha subunit. Interacts with RANBP3L. Phosphorylated on serine by BMP (bone morphogenetic proteins) type 1 receptor kinase and activin type I receptor-like kinases (ALK-2, ALK-3 and ALK-6).

Its subcellular location is the cytoplasm. The protein resides in the nucleus. Its function is as follows. Transcriptional modulator activated by BMP (bone morphogenetic proteins) type 1 receptor kinase. SMAD9 is a receptor-regulated SMAD (R-SMAD). Has been shown to be activated by activin type I receptor-like kinases (ALK-2, ALK-3, ALK-6) which stimulate heteromerization between SMAD9 and SMAD4. May play a role in osteoblast differentiation and maturation. The chain is Mothers against decapentaplegic homolog 9 (Smad9) from Mus musculus (Mouse).